The sequence spans 157 residues: MRIGIGIDVHPFAEGRKLIVGGVDIPSPKGLEGHSDADVLLHAVSDALLGAAALGDIGLHFPNTSAEYKDIDSMILLKHVGRLLTKNGYRTVNVDAMLLLEAPKIAPYVADMRRNIARCLDIDTSLVSVKATTNEKLGYIGREEGAAAHAVCIIETL.

A divalent metal cation-binding residues include aspartate 8 and histidine 10. Residues 8 to 10 (DVH) and 34 to 35 (HS) each bind 4-CDP-2-C-methyl-D-erythritol 2-phosphate. Histidine 42 lines the a divalent metal cation pocket. 4-CDP-2-C-methyl-D-erythritol 2-phosphate contacts are provided by residues 56 to 58 (DIG), 132 to 135 (TTNE), and arginine 142.

It belongs to the IspF family. As to quaternary structure, homotrimer. A divalent metal cation is required as a cofactor.

The catalysed reaction is 4-CDP-2-C-methyl-D-erythritol 2-phosphate = 2-C-methyl-D-erythritol 2,4-cyclic diphosphate + CMP. It participates in isoprenoid biosynthesis; isopentenyl diphosphate biosynthesis via DXP pathway; isopentenyl diphosphate from 1-deoxy-D-xylulose 5-phosphate: step 4/6. Functionally, involved in the biosynthesis of isopentenyl diphosphate (IPP) and dimethylallyl diphosphate (DMAPP), two major building blocks of isoprenoid compounds. Catalyzes the conversion of 4-diphosphocytidyl-2-C-methyl-D-erythritol 2-phosphate (CDP-ME2P) to 2-C-methyl-D-erythritol 2,4-cyclodiphosphate (ME-CPP) with a corresponding release of cytidine 5-monophosphate (CMP). This chain is 2-C-methyl-D-erythritol 2,4-cyclodiphosphate synthase, found in Chlorobium luteolum (strain DSM 273 / BCRC 81028 / 2530) (Pelodictyon luteolum).